A 660-amino-acid polypeptide reads, in one-letter code: Acetyl-coenzyme A synthetase (660 aa).

Residues 197–200 and Thr317 contribute to the CoA site; that span reads RGGK. ATP-binding positions include 397-399, 421-426, Asp512, and Arg528; these read GEP and DTFWQT. Ser536 is a CoA binding site. Arg539 contributes to the ATP binding site. Residues Val550 and Val555 each contribute to the Mg(2+) site. Residue Lys625 is modified to N6-acetyllysine.

Belongs to the ATP-dependent AMP-binding enzyme family. The cofactor is Mg(2+). In terms of processing, acetylated. Deacetylation by the SIR2-homolog deacetylase activates the enzyme.

It catalyses the reaction acetate + ATP + CoA = acetyl-CoA + AMP + diphosphate. It functions in the pathway ketone degradation; acetoin degradation. Catalyzes the conversion of acetate into acetyl-CoA (AcCoA), an essential intermediate at the junction of anabolic and catabolic pathways. AcsA undergoes a two-step reaction. In the first half reaction, AcsA combines acetate with ATP to form acetyl-adenylate (AcAMP) intermediate. In the second half reaction, it can then transfer the acetyl group from AcAMP to the sulfhydryl group of CoA, forming the product AcCoA. Although acetate is the preferred substrate of AcsA, propionate is also used, but at a diminished rate compared with that of acetate. Fatty acids with more than three carbon atoms are usually not accepted as substrates by AcsA. This Cupriavidus necator (strain ATCC 17699 / DSM 428 / KCTC 22496 / NCIMB 10442 / H16 / Stanier 337) (Ralstonia eutropha) protein is Acetyl-coenzyme A synthetase.